The sequence spans 160 residues: UPF0262 protein ELI_10965 (160 aa).

This sequence belongs to the UPF0262 family.

The polypeptide is UPF0262 protein ELI_10965 (Erythrobacter litoralis (strain HTCC2594)).